Here is a 370-residue protein sequence, read N- to C-terminus: MDAPRQVVNFGPGPAKLPHSVLLEIQKELLDYKGVGISVLEMSHRSSDFAKIINNTENLVRELLAVPDNYKVIFLQGGGCGQFSAVPLNLIGLKAGRCADYVVTGAWSAKAAEEAKKFGTINIVHPKLGSYTKIPDPSTWNLNPDASYVYYCANETVHGVEFDFIPDVKGAVLVCDMSSNFLSKPVDVSKFGVIFAGAQKNVGSAGVTVVIVRDDLLGFALRECPSVLEYKVQAGNSSLYNTPPCFSIYVMGLVLEWIKNNGGAAAMEKLSSIKSQTIYEIIDNSQGFYVCPVEPQNRSKMNIPFRIGNAKGDDALEKRFLDKALELNMLSLKGHRSVGGIRASLYNAVTIEDVQKLAAFMKKFLEMHQL.

The residue at position 1 (Met-1) is an N-acetylmethionine. 2 residues coordinate O-phospho-L-serine: His-44 and Arg-45. Lys-51 is modified (N6-acetyllysine). The pyridoxal 5'-phosphate site is built by Gly-79, Cys-80, and Trp-107. At Lys-127 the chain carries N6-acetyllysine. Thr-156, Asp-176, and Gln-199 together coordinate pyridoxal 5'-phosphate. Residue Lys-200 is modified to N6-(pyridoxal phosphate)lysine. 2 residues coordinate pyridoxal 5'-phosphate: Asn-241 and Thr-242. N6-acetyllysine occurs at positions 269, 318, and 323. A Phosphoserine modification is found at Ser-331. At Lys-333 the chain carries N6-acetyllysine. O-phospho-L-serine contacts are provided by His-335, Arg-336, and Arg-342.

It belongs to the class-V pyridoxal-phosphate-dependent aminotransferase family. SerC subfamily. In terms of assembly, homodimer. It depends on pyridoxal 5'-phosphate as a cofactor. Expressed at high levels in the brain, liver, kidney and pancreas, and very weakly expressed in the thymus, prostate, testis and colon.

The catalysed reaction is O-phospho-L-serine + 2-oxoglutarate = 3-phosphooxypyruvate + L-glutamate. The protein operates within amino-acid biosynthesis; L-serine biosynthesis; L-serine from 3-phospho-D-glycerate: step 2/3. Phosphoserine transaminase activity is strongly stimulated by increasing the ionic strength. Its function is as follows. Involved in L-serine biosynthesis via the phosphorylated pathway, a three-step pathway converting the glycolytic intermediate 3-phospho-D-glycerate into L-serine. Catalyzes the second step, that is the pyridoxal 5'-phosphate-dependent transamination of 3-phosphohydroxypyruvate and L-glutamate to O-phosphoserine (OPS) and alpha-ketoglutarate. This chain is Phosphoserine aminotransferase, found in Homo sapiens (Human).